Consider the following 137-residue polypeptide: Ribonuclease kappa (137 aa).

2 consecutive transmembrane segments (helical) span residues 52–72 and 104–124; these read ACGI…GIFF and VSYN…FSFC.

Belongs to the RNase K family. In terms of assembly, interacts with the proton translocation complex V0 of the V-ATPase. Interacts with ATP6AP1. Widely expressed.

The protein resides in the endomembrane system. The protein localises to the cytoplasmic vesicle. It is found in the clathrin-coated vesicle membrane. Functionally, endoribonuclease which preferentially cleaves ApU and ApG phosphodiester bonds. Hydrolyzes UpU bonds at a lower rate. Regulates the activity of vacuolar (H+)-ATPase (V-ATPase) which is responsible for acidifying and maintaining the pH of intracellular compartments. Required at an early stage of receptor-mediated endocytosis. In terms of biological role, (Microbial infection) Required at an early stage of both clathrin-mediated and clathrin-independent endocytic uptake of a diverse set of viruses, including dengue, West Nile, Sindbis, Rift Valley Fever, influenza, and human rhinoviruses. The polypeptide is Ribonuclease kappa (RNASEK) (Homo sapiens (Human)).